The sequence spans 160 residues: Coat protein TP3 (160 aa).

The protein resides in the virion. The sequence is that of Coat protein TP3 from Thermoproteus tenax (TTV1).